Here is a 391-residue protein sequence, read N- to C-terminus: UPF0229 protein BCG9842_B4751 (391 aa).

A compositionally biased stretch (polar residues) spans 1–16; that stretch reads MGEENQPNYTISQENW. Disordered stretches follow at residues 1-31 and 80-117; these read MGEE…RHQE and HVGQ…GDAA. Over residues 21–31 the composition is skewed to basic and acidic residues; it reads KGYDDQQRHQE. The span at 98 to 115 shows a compositional bias: gly residues; that stretch reads GSGGQKQKGPGKGQGAGD.

The protein belongs to the UPF0229 family.

In Bacillus cereus (strain G9842), this protein is UPF0229 protein BCG9842_B4751.